The sequence spans 781 residues: Phenylalanine--tRNA ligase beta subunit (781 aa).

The tRNA-binding domain occupies 39–147 (APPFNDVVVA…DDAPVGEDLR (109 aa)). The 76-residue stretch at 398–473 (PRREPIELRL…RLFGYDRIPA (76 aa)) folds into the B5 domain. 4 residues coordinate Mg(2+): Asp451, Asp457, Glu460, and Glu461. Positions 687–780 (SRFPQVRRDL…AARRCSATLR (94 aa)) constitute an FDX-ACB domain.

The protein belongs to the phenylalanyl-tRNA synthetase beta subunit family. Type 1 subfamily. Tetramer of two alpha and two beta subunits. Mg(2+) serves as cofactor.

It localises to the cytoplasm. It carries out the reaction tRNA(Phe) + L-phenylalanine + ATP = L-phenylalanyl-tRNA(Phe) + AMP + diphosphate + H(+). This chain is Phenylalanine--tRNA ligase beta subunit, found in Thiobacillus denitrificans (strain ATCC 25259 / T1).